The sequence spans 386 residues: DNA dC-&gt;dU-editing enzyme APOBEC-3D (386 aa).

CMP/dCMP-type deaminase domains are found at residues 29–145 (GRSY…DWRW) and 187–334 (DDNY…LCSL). H78, C109, C112, and H262 together coordinate Zn(2+). E264 functions as the Proton donor in the catalytic mechanism. Residues C293 and C296 each coordinate Zn(2+).

It belongs to the cytidine and deoxycytidylate deaminase family. As to quaternary structure, can form homo- and heterodimers with APOBEC3F and APOBEC3G. Interacts with L1RE1; this interaction inhibits LINE-1 retrotransposition. In terms of assembly, (Microbial infection) Interacts with HIV-1 Vif. This interaction triggers APOBEC3D polyubiquitylation and degradation by the 26S proteasome. Zn(2+) serves as cofactor. Expressed in lymphoid organs. Also detected in non-lymphoid tissues including lung.

It is found in the cytoplasm. Its subcellular location is the P-body. It carries out the reaction a 2'-deoxycytidine in single-stranded DNA + H2O + H(+) = a 2'-deoxyuridine in single-stranded DNA + NH4(+). (Microbial infection) Antiviral activity is neutralized by the HIV-1 virion infectivity factor (Vif), that prevents its incorporation into progeny virions by both inhibiting its translation and/or by inducing its ubiquitination and subsequent degradation by the 26S proteasome. In terms of biological role, DNA deaminase (cytidine deaminase) which acts as an inhibitor of retrovirus replication and retrotransposon mobility via deaminase-dependent and -independent mechanisms. Exhibits antiviral activity against HIV-1. After the penetration of retroviral nucleocapsids into target cells of infection and the initiation of reverse transcription, it can induce the conversion of cytosine to uracil in the minus-sense single-strand viral DNA, leading to G-to-A hypermutations in the subsequent plus-strand viral DNA. The resultant detrimental levels of mutations in the proviral genome, along with a deamination-independent mechanism that works prior to the proviral integration, together exert efficient antiretroviral effects in infected target cells. Selectively targets single-stranded DNA and does not deaminate double-stranded DNA or single- or double-stranded RNA. Also inhibits the mobility of LTR and non-LTR retrotransposons. (Microbial infection) Enhances hepatitis B virus/HBV replication by excluding restriction factors APOBEC3F and APOBEC3G from HBV capsids. The protein is DNA dC-&gt;dU-editing enzyme APOBEC-3D of Homo sapiens (Human).